A 304-amino-acid polypeptide reads, in one-letter code: Probable 5-dehydro-4-deoxyglucarate dehydratase (304 aa).

It belongs to the DapA family.

It carries out the reaction 5-dehydro-4-deoxy-D-glucarate + H(+) = 2,5-dioxopentanoate + CO2 + H2O. It participates in carbohydrate acid metabolism; D-glucarate degradation; 2,5-dioxopentanoate from D-glucarate: step 2/2. The sequence is that of Probable 5-dehydro-4-deoxyglucarate dehydratase from Arthrobacter sp. (strain FB24).